Consider the following 381-residue polypeptide: Dual-specificity RNA methyltransferase RlmN (381 aa).

Glutamate 96 acts as the Proton acceptor in catalysis. Positions 102–342 constitute a Radical SAM core domain; the sequence is TDDRGTLCVS…TRTTRGDDID (241 aa). Cysteine 109 and cysteine 345 are oxidised to a cystine. [4Fe-4S] cluster contacts are provided by cysteine 116, cysteine 120, and cysteine 123. Residues 170-171, serine 202, 224-226, and asparagine 302 contribute to the S-adenosyl-L-methionine site; these read GE and SLH. Cysteine 345 serves as the catalytic S-methylcysteine intermediate.

Belongs to the radical SAM superfamily. RlmN family. [4Fe-4S] cluster serves as cofactor.

The protein resides in the cytoplasm. It carries out the reaction adenosine(2503) in 23S rRNA + 2 reduced [2Fe-2S]-[ferredoxin] + 2 S-adenosyl-L-methionine = 2-methyladenosine(2503) in 23S rRNA + 5'-deoxyadenosine + L-methionine + 2 oxidized [2Fe-2S]-[ferredoxin] + S-adenosyl-L-homocysteine. It catalyses the reaction adenosine(37) in tRNA + 2 reduced [2Fe-2S]-[ferredoxin] + 2 S-adenosyl-L-methionine = 2-methyladenosine(37) in tRNA + 5'-deoxyadenosine + L-methionine + 2 oxidized [2Fe-2S]-[ferredoxin] + S-adenosyl-L-homocysteine. Its function is as follows. Specifically methylates position 2 of adenine 2503 in 23S rRNA and position 2 of adenine 37 in tRNAs. m2A2503 modification seems to play a crucial role in the proofreading step occurring at the peptidyl transferase center and thus would serve to optimize ribosomal fidelity. The chain is Dual-specificity RNA methyltransferase RlmN from Pseudomonas putida (strain W619).